Here is a 292-residue protein sequence, read N- to C-terminus: Calponin-1 (292 aa).

Residues 28 to 131 enclose the Calponin-homology (CH) domain; the sequence is PQTERQLRVW…STLIALASQA (104 aa). 3 Calponin-like repeats span residues 164–189, 204–229, and 243–268; these read IGLQ…RHLY, ISLQ…RQIF, and IGLQ…RQVY. T170 is modified (phosphothreonine; by ROCK2). S175 carries the post-translational modification Phosphoserine; by PKC, CaMK2 and ROCK2. 2 positions are modified to phosphothreonine; by ROCK2: T180 and T184. T184 carries the phosphothreonine; by PKC and CaMK2 modification. Positions 185 to 193 are calmodulin-binding; the sequence is RRHLYDPKL. A Phosphothreonine; by ROCK2 modification is found at T259.

This sequence belongs to the calponin family. Phosphorylation by PKC or CaM kinase II reduces the binding of calponin to F-actin and tropomyosin. As to expression, smooth muscle, and tissues containing significant amounts of smooth muscle.

Thin filament-associated protein that is implicated in the regulation and modulation of smooth muscle contraction. It is capable of binding to actin, calmodulin and tropomyosin. The interaction of calponin with actin inhibits the actomyosin Mg-ATPase activity. The sequence is that of Calponin-1 (CNN1) from Gallus gallus (Chicken).